Consider the following 312-residue polypeptide: Olfactory receptor 2M5 (312 aa).

Residues 1 to 25 (MAWENQTFNSDFILLGIFNHSPTHT) lie on the Extracellular side of the membrane. N-linked (GlcNAc...) asparagine glycosylation occurs at Asn5. The helical transmembrane segment at 26 to 49 (FLFFLVLAIFSVAFMGNSVMVLLI) threads the bilayer. Residues 50-57 (YLDTQLHT) lie on the Cytoplasmic side of the membrane. Residues 58–79 (PMYFLLSQLFLMDLMLICSTVP) traverse the membrane as a helical segment. Topologically, residues 80 to 100 (KMAFNYLSGSKSISMAGCATQ) are extracellular. Cysteines 97 and 189 form a disulfide. Residues 101-120 (IFFYVSLLGSECFLLAVMSY) form a helical membrane-spanning segment. The Cytoplasmic portion of the chain corresponds to 121–139 (DRYIAICHPLRYTNLMRPK). A helical transmembrane segment spans residues 140 to 158 (ICGLMTAFSWILGSMDAII). Topologically, residues 159 to 195 (DAVATFSFSYCGSREIAHFFCDFPSLLILSCNDTSIF) are extracellular. The helical transmembrane segment at 196–219 (EKVLFICCIVMIVFPVAIIIASYA) threads the bilayer. Residues 220-236 (RVILAVIHMGSGEGRRK) lie on the Cytoplasmic side of the membrane. Residues 237 to 259 (AFTTCSSHLMVVGMYYGAGLFMY) traverse the membrane as a helical segment. The Extracellular portion of the chain corresponds to 260–272 (IRPTSDRSPMQDK). The helical transmembrane segment at 273–292 (LVSVFYTILTPMLNPLIYSL) threads the bilayer. Residues 293-311 (RNKEVTRALRKVLGKGKCG) are Cytoplasmic-facing.

Belongs to the G-protein coupled receptor 1 family.

It localises to the cell membrane. Its function is as follows. Odorant receptor. The sequence is that of Olfactory receptor 2M5 (OR2M5) from Homo sapiens (Human).